Reading from the N-terminus, the 362-residue chain is Chorismate synthase (362 aa).

Residues arginine 48 and arginine 54 each contribute to the NADP(+) site. FMN is bound by residues 125–127, 237–238, glycine 277, 292–296, and arginine 318; these read RSS, NA, and KPTSS.

Belongs to the chorismate synthase family. Homotetramer. The cofactor is FMNH2.

It catalyses the reaction 5-O-(1-carboxyvinyl)-3-phosphoshikimate = chorismate + phosphate. It functions in the pathway metabolic intermediate biosynthesis; chorismate biosynthesis; chorismate from D-erythrose 4-phosphate and phosphoenolpyruvate: step 7/7. Catalyzes the anti-1,4-elimination of the C-3 phosphate and the C-6 proR hydrogen from 5-enolpyruvylshikimate-3-phosphate (EPSP) to yield chorismate, which is the branch point compound that serves as the starting substrate for the three terminal pathways of aromatic amino acid biosynthesis. This reaction introduces a second double bond into the aromatic ring system. In Idiomarina loihiensis (strain ATCC BAA-735 / DSM 15497 / L2-TR), this protein is Chorismate synthase.